The sequence spans 36 residues: Trypsin inhibitor 2 (36 aa).

3 disulfides stabilise this stretch: C3-C20, C10-C24, and C19-C35.

Trypsin inhibitor. The chain is Trypsin inhibitor 2 from Spinacia oleracea (Spinach).